The following is a 319-amino-acid chain: 1-aminocyclopropane-1-carboxylate oxidase 1 (319 aa).

The region spanning 153 to 253 (PNFGTKVSNY…RMSLASFYNP (101 aa)) is the Fe2OG dioxygenase domain. Residues H177, D179, and H234 each coordinate Fe cation.

It belongs to the iron/ascorbate-dependent oxidoreductase family. The cofactor is Fe cation.

It catalyses the reaction 1-aminocyclopropane-1-carboxylate + L-ascorbate + O2 = ethene + L-dehydroascorbate + hydrogen cyanide + CO2 + 2 H2O. It functions in the pathway alkene biosynthesis; ethylene biosynthesis via S-adenosyl-L-methionine; ethylene from S-adenosyl-L-methionine: step 2/2. The sequence is that of 1-aminocyclopropane-1-carboxylate oxidase 1 (ACO1) from Petunia hybrida (Petunia).